We begin with the raw amino-acid sequence, 155 residues long: Transcriptional repressor NrdR (155 aa).

Residues 3-34 (CPFCNQTDTKVIDSRLVADGVQVRRRRECQAC) fold into a zinc finger. An ATP-cone domain is found at 49 to 139 (PKVIKQDGTR…VYRSFQDISE (91 aa)).

This sequence belongs to the NrdR family. The cofactor is Zn(2+).

Negatively regulates transcription of bacterial ribonucleotide reductase nrd genes and operons by binding to NrdR-boxes. The sequence is that of Transcriptional repressor NrdR from Teredinibacter turnerae (strain ATCC 39867 / T7901).